The chain runs to 707 residues: Polyribonucleotide nucleotidyltransferase (707 aa).

Mg(2+) is bound by residues Asp-486 and Asp-492. The 60-residue stretch at Pro-553–Ile-612 folds into the KH domain. One can recognise an S1 motif domain in the interval Gly-622–Lys-690.

It belongs to the polyribonucleotide nucleotidyltransferase family. As to quaternary structure, component of the RNA degradosome, which is a multiprotein complex involved in RNA processing and mRNA degradation. Mg(2+) serves as cofactor.

The protein resides in the cytoplasm. It carries out the reaction RNA(n+1) + phosphate = RNA(n) + a ribonucleoside 5'-diphosphate. Its function is as follows. Involved in mRNA degradation. Catalyzes the phosphorolysis of single-stranded polyribonucleotides processively in the 3'- to 5'-direction. The polypeptide is Polyribonucleotide nucleotidyltransferase (Buchnera aphidicola subsp. Schizaphis graminum (strain Sg)).